The primary structure comprises 153 residues: NADH dehydrogenase [ubiquinone] 1 beta subcomplex subunit 11, mitochondrial (153 aa).

The N-terminal 29 residues, 1-29 (MAAGLFGLSARRLLAAAATRGLPAARVRW), are a transit peptide targeting the mitochondrion. Residues 49-72 (PEPTTQWQEDLDPEDENLYEKNPD) form a disordered region. The helical transmembrane segment at 89 to 109 (LVFFFGVSIILVLGSTFVAYL) threads the bilayer.

It belongs to the complex I NDUFB11 subunit family. As to quaternary structure, complex I is composed of 45 different subunits. Interacts with BCAP31.

The protein resides in the mitochondrion inner membrane. Functionally, accessory subunit of the mitochondrial membrane respiratory chain NADH dehydrogenase (Complex I), that is believed not to be involved in catalysis. Complex I functions in the transfer of electrons from NADH to the respiratory chain. The immediate electron acceptor for the enzyme is believed to be ubiquinone. The polypeptide is NADH dehydrogenase [ubiquinone] 1 beta subcomplex subunit 11, mitochondrial (NDUFB11) (Pongo pygmaeus (Bornean orangutan)).